We begin with the raw amino-acid sequence, 169 residues long: Putative hydrolase 111R (169 aa).

Residues 46-169 (FEKRKAGVFV…QKILMALSCN (124 aa)) form the Nudix hydrolase domain. The short motif at 76-98 (GHMEAYDHSPKTCAERELKEETG) is the Nudix box element. Mg(2+)-binding residues include E92, E96, and D138.

Belongs to the Nudix hydrolase family. It depends on Mg(2+) as a cofactor. Mn(2+) serves as cofactor.

The polypeptide is Putative hydrolase 111R (Aedes vexans (Inland floodwater mosquito)).